The following is a 1230-amino-acid chain: ATP-dependent helicase/nuclease subunit A (1230 aa).

The UvrD-like helicase ATP-binding domain maps to Thr-3–Gln-473. Position 24–31 (Ala-24–Thr-31) interacts with ATP. One can recognise a UvrD-like helicase C-terminal domain in the interval Glu-500–Gly-782.

It belongs to the helicase family. AddA subfamily. In terms of assembly, heterodimer of AddA and AddB/RexB. Mg(2+) serves as cofactor.

The catalysed reaction is Couples ATP hydrolysis with the unwinding of duplex DNA by translocating in the 3'-5' direction.. The enzyme catalyses ATP + H2O = ADP + phosphate + H(+). Its function is as follows. The heterodimer acts as both an ATP-dependent DNA helicase and an ATP-dependent, dual-direction single-stranded exonuclease. Recognizes the chi site generating a DNA molecule suitable for the initiation of homologous recombination. The AddA nuclease domain is required for chi fragment generation; this subunit has the helicase and 3' -&gt; 5' nuclease activities. The polypeptide is ATP-dependent helicase/nuclease subunit A (Leuconostoc mesenteroides subsp. mesenteroides (strain ATCC 8293 / DSM 20343 / BCRC 11652 / CCM 1803 / JCM 6124 / NCDO 523 / NBRC 100496 / NCIMB 8023 / NCTC 12954 / NRRL B-1118 / 37Y)).